The primary structure comprises 1093 residues: Non-canonical non-ribosomal peptide synthetase ascB (1093 aa).

The span at 1-26 shows a compositional bias: low complexity; sequence MTVNGHHTNGVNGANGTNGHANGSNG. Residues 1-27 are disordered; that stretch reads MTVNGHHTNGVNGANGTNGHANGSNGI. The interval 35 to 392 is adenylation (A) domain; sequence EIVPFVKPQV…LSLTFAPTDN (358 aa). The region spanning 591-678 is the Carrier domain; sequence DNLEQNLKSL…EIAAALTKGS (88 aa). Ser-627 is modified (O-(pantetheine 4'-phosphoryl)serine). A thioester reductase (TR) domain region spans residues 721–971; the sequence is LTGATGSLGS…IPVDDAASTV (251 aa).

The protein belongs to the NRP synthetase family.

The catalysed reaction is ilicicolinate B + AH2 + ATP = ilicicolin B + A + AMP + diphosphate. The protein operates within secondary metabolite biosynthesis; terpenoid biosynthesis. In terms of biological role, non-canonical non-ribosomal peptide synthetase; part of the asc-1 gene cluster that mediates the biosynthesis of both ascochlorin and ascofuranone, a strong inhibitor of cyanide-insensitive alternative oxidases and a promising drug candidate against African trypanosomiasis. The first step in the pathway is performed by the non-reducing polyketide synthase ascC that produces orsellinic acid by condensing acetyl-CoA with 3 malonyl-CoA units. Orsellinic acid is then prenylated by the prenyltransferase ascA to yield ilicicolinic acid B. Ilicicolinic acid B is further reduced to ilicicolin B by the reductase ascB. The halogenase ascD then chlorinates ilicicolin B to produce ilicicolin A which is converted to ilicicolin A epoxide by the cytochrome P450 monooxygenase ascE that catalyzes stereoselective epoxidation of the terminal double bond of the prenyl group. Ilicicolin A epoxide is the last common precursor for the biosynthesis of ascofuranone and ascochlorin. The terpene cyclase ascF produces a monocyclic terpene, and the cyclization reaction is proposed to be initiated by protonation of the terminal epoxide of ilicicolin A epoxide to generate a monocyclic tertiarycation, which is followed by a series of hydride and methyl shifts with abstraction of proton, leading to the formation of the (14S,15R,19R)-trimethylcyclohexanone ring structure of ilicicolin C, which is finally reduced to ascochlorin by the dehydrogenase ascG. On the other hand, ilicicolin A epoxide is hydroxylated by the cytochrome P450 monooxygenase ascH, and the resultant product is cyclized by the terpene cyclase ascI to ascofuranol via protonation-initiated epoxide ring opening, which facilitates the 6-endo-tet cyclization to form the tetrahy-drofuran ring. Finally, ascofuranol is oxidized into ascofuranone by ascJ. This is Non-canonical non-ribosomal peptide synthetase ascB from Acremonium egyptiacum (Oospora egyptiaca).